Reading from the N-terminus, the 414-residue chain is Phospholipase A1-IIbeta (414 aa).

Residue K19 forms a Glycyl lysine isopeptide (Lys-Gly) (interchain with G-Cter in ubiquitin) linkage. Residues 191-217 (DKTSAQEQVQEELKRLLELYKNEDVTI) adopt a coiled-coil conformation. S223 (acyl-ester intermediate) is an active-site residue. Active-site charge relay system residues include S223, D289, and H326. Positions 386-414 (DGTWKLNGDRSKKKQEEEDEKEENNCKFP) are disordered. Residues 390–410 (KLNGDRSKKKQEEEDEKEENN) are a coiled coil. Basic and acidic residues predominate over residues 392 to 401 (NGDRSKKKQE).

The protein belongs to the AB hydrolase superfamily. Lipase family.

The protein localises to the cytoplasm. Functionally, acylhydrolase that catalyzes the hydrolysis of phospholipids at the sn-1 position. The protein is Phospholipase A1-IIbeta of Arabidopsis thaliana (Mouse-ear cress).